The sequence spans 177 residues: von Ebner gland protein 1 (177 aa).

An N-terminal signal peptide occupies residues Met-1–Ala-18. A disulfide bridge links Cys-80 with Cys-172.

Belongs to the calycin superfamily. Lipocalin family. In terms of assembly, homodimer.

Its subcellular location is the secreted. Functionally, could play a role in taste reception. Could be necessary for the concentration and delivery of sapid molecules in the gustatory system. The sequence is that of von Ebner gland protein 1 (Vegp1) from Rattus norvegicus (Rat).